The chain runs to 228 residues: Response regulator SaeR (228 aa).

In terms of domain architecture, Response regulatory spans 3-116 (HLLIVDDEQD…ELVLRINNLL (114 aa)). The residue at position 51 (D51) is a 4-aspartylphosphate. The segment at residues 127–226 (VEQLSFDELT…VWGLGYKFER (100 aa)) is a DNA-binding region (ompR/PhoB-type).

In terms of processing, phosphorylated by SaeS.

The protein localises to the cytoplasm. Functionally, member of the two-component regulatory system SaeR/SaeS involved in the regulation of staphylococcal virulence factors in a strain-dependent fashion. Probably functions as a transcriptional regulator via a specific DNA-binding domain, recognizing motifs near the promoter sequences of target genes. The protein is Response regulator SaeR (saeR) of Staphylococcus aureus (strain USA300).